The chain runs to 332 residues: Fructose-1,6-bisphosphatase class 1 (332 aa).

Mg(2+)-binding residues include E92, D113, L115, and D116. Residues 116-119 (DGSS), N209, Y242, and K272 contribute to the substrate site. A Mg(2+)-binding site is contributed by E278.

Belongs to the FBPase class 1 family. In terms of assembly, homotetramer. The cofactor is Mg(2+).

It localises to the cytoplasm. It carries out the reaction beta-D-fructose 1,6-bisphosphate + H2O = beta-D-fructose 6-phosphate + phosphate. It participates in carbohydrate biosynthesis; Calvin cycle. This Prosthecochloris aestuarii (strain DSM 271 / SK 413) protein is Fructose-1,6-bisphosphatase class 1.